Here is a 130-residue protein sequence, read N- to C-terminus: MAQVQYYGTGRRKSSVARVRLVPGDGRIVINDRDIRDYIPSEALIEVVKQPLVLTETLGNYDVLVNVKGGGFSGQAGAIRHGIARALLQVDPDYRPVLKRAGLLTRDARVKERKKYGLKGARRAPQFSKR.

The protein belongs to the universal ribosomal protein uS9 family.

The polypeptide is Small ribosomal subunit protein uS9 (Geobacillus sp. (strain WCH70)).